Consider the following 162-residue polypeptide: Onchocystatin (162 aa).

An N-terminal signal peptide occupies residues 1–32 (MLTIKDGTLLIHLLLFSVVALVQLQGAKSARA). The tract at residues 30 to 54 (ARAKNPSKMESKTGENQDRPVLLGG) is disordered. A compositionally biased stretch (basic and acidic residues) spans 36–47 (SKMESKTGENQD). The short motif at 97-101 (QVVAG) is the Secondary area of contact element. A disulfide bond links C115 and C128.

It belongs to the cystatin family. In terms of tissue distribution, expressed in the cuticle of L3 and L4 larvae, female adult, and in the eggshell of developing microfilariae.

Its function is as follows. Cysteine protease inhibitor which inhibits members of the peptidase C1 family. In the human host, inhibits CTSL/cathepsin L and CTSS/cathepsin S and to a lesser extent CTSB/cathepsin B which may cause defects in antigen processing and thereby impair antigen-driven T cell proliferation. This chain is Onchocystatin, found in Onchocerca volvulus.